A 491-amino-acid polypeptide reads, in one-letter code: Glutamyl-tRNA(Gln) amidotransferase subunit A (491 aa).

Catalysis depends on charge relay system residues lysine 76 and serine 154. Serine 178 functions as the Acyl-ester intermediate in the catalytic mechanism.

The protein belongs to the amidase family. GatA subfamily. As to quaternary structure, heterotrimer of A, B and C subunits.

It catalyses the reaction L-glutamyl-tRNA(Gln) + L-glutamine + ATP + H2O = L-glutaminyl-tRNA(Gln) + L-glutamate + ADP + phosphate + H(+). In terms of biological role, allows the formation of correctly charged Gln-tRNA(Gln) through the transamidation of misacylated Glu-tRNA(Gln) in organisms which lack glutaminyl-tRNA synthetase. The reaction takes place in the presence of glutamine and ATP through an activated gamma-phospho-Glu-tRNA(Gln). This Cereibacter sphaeroides (strain ATCC 17025 / ATH 2.4.3) (Rhodobacter sphaeroides) protein is Glutamyl-tRNA(Gln) amidotransferase subunit A.